Here is a 344-residue protein sequence, read N- to C-terminus: MKILGIETSCDETGVAIYDEDKGLVANQLYSQIEMHADYGGVVPELASRDHIRKTLPLIQEALKEANLTASDIDGVAYTAGPGLVGALLVGSTIARSLAYAWNVPALGVHHMEGHLLAPMLEENAPEFPFVALLVSGGHTQLVDVKNVGEYELLGESIDDAAGEAFDKTAKLLGLDYPGGAALAKLAESGTPNRFTFPRPMTDRPGLDFSFSGLKTFAANTINANLNEKGELEQQTRCDIAYAFQQAVIETLIIKCRRALQQTGYKRLVIAGGVSANKQLRHDLAELMKQIGGEVFYPRPQFCTDNGAMIAYAGFLRLKNGEQTDLSVSVKPRWPMVELCPIDV.

Fe cation contacts are provided by His111 and His115. Residues 134–138 (LVSGG), Asp167, Gly180, and Asn277 contribute to the substrate site. Asp305 lines the Fe cation pocket.

This sequence belongs to the KAE1 / TsaD family. Fe(2+) is required as a cofactor.

The protein localises to the cytoplasm. The enzyme catalyses L-threonylcarbamoyladenylate + adenosine(37) in tRNA = N(6)-L-threonylcarbamoyladenosine(37) in tRNA + AMP + H(+). Functionally, required for the formation of a threonylcarbamoyl group on adenosine at position 37 (t(6)A37) in tRNAs that read codons beginning with adenine. Is involved in the transfer of the threonylcarbamoyl moiety of threonylcarbamoyl-AMP (TC-AMP) to the N6 group of A37, together with TsaE and TsaB. TsaD likely plays a direct catalytic role in this reaction. This is tRNA N6-adenosine threonylcarbamoyltransferase from Glaesserella parasuis serovar 5 (strain SH0165) (Haemophilus parasuis).